The chain runs to 122 residues: Small ribosomal subunit protein uS12 (122 aa).

3-methylthioaspartic acid is present on Asp89.

Belongs to the universal ribosomal protein uS12 family. As to quaternary structure, part of the 30S ribosomal subunit. Contacts proteins S8 and S17. May interact with IF1 in the 30S initiation complex.

Functionally, with S4 and S5 plays an important role in translational accuracy. Its function is as follows. Interacts with and stabilizes bases of the 16S rRNA that are involved in tRNA selection in the A site and with the mRNA backbone. Located at the interface of the 30S and 50S subunits, it traverses the body of the 30S subunit contacting proteins on the other side and probably holding the rRNA structure together. The combined cluster of proteins S8, S12 and S17 appears to hold together the shoulder and platform of the 30S subunit. In Corynebacterium glutamicum (strain R), this protein is Small ribosomal subunit protein uS12.